The chain runs to 628 residues: Phosphomethylpyrimidine synthase (628 aa).

Substrate is bound by residues Asn-229, Met-258, Tyr-287, His-323, 343–345 (SRG), 384–387 (DGLR), and Glu-423. His-427 is a binding site for Zn(2+). Residue Tyr-450 coordinates substrate. Position 491 (His-491) interacts with Zn(2+). Residues Cys-571, Cys-574, and Cys-579 each coordinate [4Fe-4S] cluster.

It belongs to the ThiC family. As to quaternary structure, homodimer. Requires [4Fe-4S] cluster as cofactor.

The enzyme catalyses 5-amino-1-(5-phospho-beta-D-ribosyl)imidazole + S-adenosyl-L-methionine = 4-amino-2-methyl-5-(phosphooxymethyl)pyrimidine + CO + 5'-deoxyadenosine + formate + L-methionine + 3 H(+). It participates in cofactor biosynthesis; thiamine diphosphate biosynthesis. Its function is as follows. Catalyzes the synthesis of the hydroxymethylpyrimidine phosphate (HMP-P) moiety of thiamine from aminoimidazole ribotide (AIR) in a radical S-adenosyl-L-methionine (SAM)-dependent reaction. This Variovorax paradoxus (strain S110) protein is Phosphomethylpyrimidine synthase.